Reading from the N-terminus, the 119-residue chain is Large ribosomal subunit protein uL18 (119 aa).

This sequence belongs to the universal ribosomal protein uL18 family. As to quaternary structure, part of the 50S ribosomal subunit; part of the 5S rRNA/L5/L18/L25 subcomplex. Contacts the 5S and 23S rRNAs.

In terms of biological role, this is one of the proteins that bind and probably mediate the attachment of the 5S RNA into the large ribosomal subunit, where it forms part of the central protuberance. In Malacoplasma penetrans (strain HF-2) (Mycoplasma penetrans), this protein is Large ribosomal subunit protein uL18.